The sequence spans 225 residues: UPF0758 protein BPP1850 (225 aa).

One can recognise an MPN domain in the interval 103–225; the sequence is ALANPDLVRR…TVSMAAQGHL (123 aa). Zn(2+)-binding residues include His-174, His-176, and Asp-187. Residues 174–187 carry the JAMM motif motif; sequence HNHPGGTAAASAAD.

The protein belongs to the UPF0758 family.

In Bordetella parapertussis (strain 12822 / ATCC BAA-587 / NCTC 13253), this protein is UPF0758 protein BPP1850.